Here is a 250-residue protein sequence, read N- to C-terminus: uncharacterized protein (250 aa).

This is an uncharacterized protein from Rickettsia prowazekii (strain Madrid E).